Consider the following 189-residue polypeptide: MDYIIAGLGNPGERYTFTRHNAGFLAIDYLAQAFNTKVDKIKFKGLTGSFEYADKKVLLLKPMTYMNSSGDSIVEAVNFYKVKPEKLIVIYDDIAFDVGVVKMRKKGSDGGHNGVKSIIQRLGTEEFPRIRIGIGVPKEDMVKYVLSEFEDYEKQKIFRAIEKAAQGIKILLESGIDRAMNYINGDVVV.

Tyr15 is a tRNA binding site. The active-site Proton acceptor is His20. Residues Tyr65, Asn67, and Asn113 each coordinate tRNA.

Belongs to the PTH family. Monomer.

The protein localises to the cytoplasm. It carries out the reaction an N-acyl-L-alpha-aminoacyl-tRNA + H2O = an N-acyl-L-amino acid + a tRNA + H(+). Functionally, hydrolyzes ribosome-free peptidyl-tRNAs (with 1 or more amino acids incorporated), which drop off the ribosome during protein synthesis, or as a result of ribosome stalling. In terms of biological role, catalyzes the release of premature peptidyl moieties from peptidyl-tRNA molecules trapped in stalled 50S ribosomal subunits, and thus maintains levels of free tRNAs and 50S ribosomes. This Caldicellulosiruptor saccharolyticus (strain ATCC 43494 / DSM 8903 / Tp8T 6331) protein is Peptidyl-tRNA hydrolase.